Reading from the N-terminus, the 304-residue chain is Protoheme IX farnesyltransferase (304 aa).

9 consecutive transmembrane segments (helical) span residues 32 to 52 (VVALMLLTVLVGMCLAVPGSV), 54 to 74 (LQPLVIGMIGIGMMAGAAAAF), 104 to 124 (ALTFAISLAALGFVLLYTLVN), 126 to 146 (LTAWLTFASLIGYALVYTAYL), 154 to 174 (IVVGGLAGAMPPLLGWTSVTG), 180 to 200 (ALLLVIIIFAWTPPHFWALAI), 226 to 246 (CILLYTVLLAIACLLPVLVGM), 247 to 267 (CGPVYLVGSTLLSCGFIYKAW), and 284 to 304 (FSIYHLMLLFLVLLVDHYLWV).

Belongs to the UbiA prenyltransferase family. Protoheme IX farnesyltransferase subfamily.

It is found in the cell inner membrane. The catalysed reaction is heme b + (2E,6E)-farnesyl diphosphate + H2O = Fe(II)-heme o + diphosphate. Its pathway is porphyrin-containing compound metabolism; heme O biosynthesis; heme O from protoheme: step 1/1. Functionally, converts heme B (protoheme IX) to heme O by substitution of the vinyl group on carbon 2 of heme B porphyrin ring with a hydroxyethyl farnesyl side group. The sequence is that of Protoheme IX farnesyltransferase from Shewanella sediminis (strain HAW-EB3).